Reading from the N-terminus, the 277-residue chain is Phosphatidylglycerol--prolipoprotein diacylglyceryl transferase (277 aa).

3 helical membrane-spanning segments follow: residues 17 to 37, 63 to 83, and 101 to 121; these read LAIHWYGLSYLAAFGLFMLLG, ILFLGVAGVVLGGRLGYCLFY, and GGMAFHGGLLGVIVAMLWFAH. An a 1,2-diacyl-sn-glycero-3-phospho-(1'-sn-glycerol)-binding site is contributed by arginine 146. The next 3 helical transmembrane spans lie at 182-202, 209-229, and 234-254; these read SQVYQFLLEGLLLFVLLWLYA, GQVAAAFLVGYGVLRFIAEQF, and AFLGILALGMSMGQWLCLPMI.

Belongs to the Lgt family.

The protein localises to the cell inner membrane. The catalysed reaction is L-cysteinyl-[prolipoprotein] + a 1,2-diacyl-sn-glycero-3-phospho-(1'-sn-glycerol) = an S-1,2-diacyl-sn-glyceryl-L-cysteinyl-[prolipoprotein] + sn-glycerol 1-phosphate + H(+). Its pathway is protein modification; lipoprotein biosynthesis (diacylglyceryl transfer). Its function is as follows. Catalyzes the transfer of the diacylglyceryl group from phosphatidylglycerol to the sulfhydryl group of the N-terminal cysteine of a prolipoprotein, the first step in the formation of mature lipoproteins. This Verminephrobacter eiseniae (strain EF01-2) protein is Phosphatidylglycerol--prolipoprotein diacylglyceryl transferase.